The chain runs to 187 residues: POM121 and ZP3 fusion protein (187 aa).

Residues 166–187 (GTPSHSRRQPRVVSQWSTSASL) are disordered. Polar residues predominate over residues 177–187 (VVSQWSTSASL).

In terms of tissue distribution, expressed in spleen, thymus, pancreas, testis, ovary, small intestine, colon and lymphocytes.

In Homo sapiens (Human), this protein is POM121 and ZP3 fusion protein (POMZP3).